A 398-amino-acid polypeptide reads, in one-letter code: Sphingosine 1-phosphate receptor 5 (398 aa).

The Extracellular portion of the chain corresponds to 1-40 (MEPGLLRPAPVSEVIVLHYNYTGKLRGARYQPGAGLRADA). An N-linked (GlcNAc...) asparagine glycan is attached at N20. The helical transmembrane segment at 41-61 (VVCLAVCALIVLENLAVLVVL) threads the bilayer. Residues 62–70 (GRHPRFHAP) are Cytoplasmic-facing. Residues 71–91 (MFLLLGSLTLSDLLAGAAYAA) form a helical membrane-spanning segment. At 92 to 111 (NILLSGPLTLRLSPALWFAR) the chain is on the extracellular side. Residues 112–132 (EGGVFVALAASVLSLLAIALE) form a helical membrane-spanning segment. Residues 133–151 (RLLTMERRGPAPAARRGRT) are Cytoplasmic-facing. A helical transmembrane segment spans residues 152–172 (LALAAGAWGVSLLLGLLPALG). The Extracellular portion of the chain corresponds to 173–191 (WNCLGRLEACSTVLPLYAK). The chain crosses the membrane as a helical span at residues 192-212 (AYVLFCVLAFVGILAAICGLY). Topologically, residues 213-252 (ARIYCQVRAKAQRLRARPGAGEGTSARARGTPRSLALLRT) are cytoplasmic. Residues 253–273 (LSVVLVAFVACWGPLFLLLLL) traverse the membrane as a helical segment. Residues 274 to 287 (DVACPARACPVLLQ) are Extracellular-facing. The helical transmembrane segment at 288 to 308 (ADPFLGLAMANSLLNPIIYTF) threads the bilayer. Residues 309-398 (TNRDLRHALL…QTLVPPPAAD (90 aa)) are Cytoplasmic-facing. Residue C323 is the site of S-palmitoyl cysteine attachment. The tract at residues 332–398 (SGTSRSPGST…QTLVPPPAAD (67 aa)) is disordered. Residues 334-343 (TSRSPGSTLG) show a composition bias toward low complexity. At S337 the chain carries Phosphoserine. Residues 359-373 (SSSRSERSSPQRDGL) show a composition bias toward basic and acidic residues. S381 carries the phosphoserine modification.

Belongs to the G-protein coupled receptor 1 family.

It localises to the cell membrane. In terms of biological role, receptor for the lysosphingolipid sphingosine 1-phosphate (S1P). S1P is a bioactive lysophospholipid that elicits diverse physiological effect on most types of cells and tissues. Is coupled to both the G(i/O)alpha and G(12) subclass of heteromeric G-proteins. This chain is Sphingosine 1-phosphate receptor 5 (S1PR5), found in Sus scrofa (Pig).